The following is a 325-amino-acid chain: MNMNKLVKSSVATSMALLLLSNTANAEGKITPVSVKKVDDKVTLYKTTATADSDKFKISQILTFNFIKDKSYDKDTLVLKAAGNINSGYERPNPKDYDFSKIYWGAKYNVSISSQSNDSVNVVDYAPKNQNEEFQVQNTLGYTFGGDISISNGLSGGLNGNTAFSETINYKQESYRTTLSRNTNYKNVGWGVEAHKIMNNGWGPYGRDSFHPTYGNELFLAGRQSSAYAGQNFIAQHQMPLLSRSNFNPEFLSVLSHRQDGAKKSKITVTYQREMDLYQIRWNGFYWAGANYKNFKTRTFKSTYEIDWENHKVKLLDTKETENNK.

An N-terminal signal peptide occupies residues 1–25; that stretch reads MNMNKLVKSSVATSMALLLLSNTAN.

This sequence belongs to the aerolysin family. As to quaternary structure, toxicity requires sequential binding and synergistic association of a class S and a class F component which form heterooligomeric complexes. HlgB (class F) associates with either hlgA thus forming an AB toxin or with hlgC thus forming a CB toxin. Interacts with host AMFR.

Toxin that seems to act by forming pores in the membrane of the cell. Has a hemolytic and a leucotoxic activity. Promotes host AMFR-mediated inflammation by mediating 'Lys-27'-linked ubiquitination of TAB3, TAK1-TAB3 complex formation and phosphorylation of TAK1/MAP3K7. In turn, activates host NF-kappa-B signaling pathway. The chain is Gamma-hemolysin component B (hlgB) from Staphylococcus aureus (strain MRSA252).